Reading from the N-terminus, the 198-residue chain is NADH-quinone oxidoreductase subunit C (198 aa).

It belongs to the complex I 30 kDa subunit family. In terms of assembly, NDH-1 is composed of 14 different subunits. Subunits NuoB, C, D, E, F, and G constitute the peripheral sector of the complex.

It localises to the cell inner membrane. It carries out the reaction a quinone + NADH + 5 H(+)(in) = a quinol + NAD(+) + 4 H(+)(out). Functionally, NDH-1 shuttles electrons from NADH, via FMN and iron-sulfur (Fe-S) centers, to quinones in the respiratory chain. The immediate electron acceptor for the enzyme in this species is believed to be ubiquinone. Couples the redox reaction to proton translocation (for every two electrons transferred, four hydrogen ions are translocated across the cytoplasmic membrane), and thus conserves the redox energy in a proton gradient. This is NADH-quinone oxidoreductase subunit C from Janthinobacterium sp. (strain Marseille) (Minibacterium massiliensis).